The primary structure comprises 360 residues: 3-isopropylmalate dehydrogenase (360 aa).

Residue 76–89 (GPKWEPLDYSLRPE) coordinates NAD(+). 4 residues coordinate substrate: Arg-96, Arg-106, Arg-134, and Asp-224. Residues Asp-224, Asp-248, and Asp-252 each contribute to the Mg(2+) site. 282–294 (GSAPDIAGRGIAN) lines the NAD(+) pocket.

This sequence belongs to the isocitrate and isopropylmalate dehydrogenases family. LeuB type 1 subfamily. As to quaternary structure, homodimer. Mg(2+) serves as cofactor. Mn(2+) is required as a cofactor.

The protein localises to the cytoplasm. It catalyses the reaction (2R,3S)-3-isopropylmalate + NAD(+) = 4-methyl-2-oxopentanoate + CO2 + NADH. It functions in the pathway amino-acid biosynthesis; L-leucine biosynthesis; L-leucine from 3-methyl-2-oxobutanoate: step 3/4. Its function is as follows. Catalyzes the oxidation of 3-carboxy-2-hydroxy-4-methylpentanoate (3-isopropylmalate) to 3-carboxy-4-methyl-2-oxopentanoate. The product decarboxylates to 4-methyl-2 oxopentanoate. This chain is 3-isopropylmalate dehydrogenase, found in Methylococcus capsulatus (strain ATCC 33009 / NCIMB 11132 / Bath).